Consider the following 212-residue polypeptide: Uracil phosphoribosyltransferase (212 aa).

5-phospho-alpha-D-ribose 1-diphosphate-binding positions include arginine 78, arginine 103, and 130 to 138 (DPMLATGSS). Uracil is bound by residues isoleucine 193 and 198 to 200 (GDA). 5-phospho-alpha-D-ribose 1-diphosphate is bound at residue aspartate 199.

The protein belongs to the UPRTase family. Mg(2+) serves as cofactor.

It carries out the reaction UMP + diphosphate = 5-phospho-alpha-D-ribose 1-diphosphate + uracil. Its pathway is pyrimidine metabolism; UMP biosynthesis via salvage pathway; UMP from uracil: step 1/1. Its activity is regulated as follows. Allosterically activated by GTP. Its function is as follows. Catalyzes the conversion of uracil and 5-phospho-alpha-D-ribose 1-diphosphate (PRPP) to UMP and diphosphate. This is Uracil phosphoribosyltransferase from Pseudomonas fluorescens (strain Pf0-1).